The following is a 197-amino-acid chain: FMN-dependent NADH:quinone oxidoreductase (197 aa).

FMN-binding positions include serine 10, 16 to 18 (SKS), and 96 to 99 (MYNF).

Belongs to the azoreductase type 1 family. In terms of assembly, homodimer. It depends on FMN as a cofactor.

It carries out the reaction 2 a quinone + NADH + H(+) = 2 a 1,4-benzosemiquinone + NAD(+). It catalyses the reaction N,N-dimethyl-1,4-phenylenediamine + anthranilate + 2 NAD(+) = 2-(4-dimethylaminophenyl)diazenylbenzoate + 2 NADH + 2 H(+). Functionally, quinone reductase that provides resistance to thiol-specific stress caused by electrophilic quinones. In terms of biological role, also exhibits azoreductase activity. Catalyzes the reductive cleavage of the azo bond in aromatic azo compounds to the corresponding amines. The sequence is that of FMN-dependent NADH:quinone oxidoreductase from Marinomonas sp. (strain MWYL1).